The chain runs to 329 residues: 36 kDa antigen (329 aa).

A helical membrane pass occupies residues 11 to 31 (AILTGGGALLLGLIVLFYLAY).

This sequence belongs to the membrane fusion protein (MFP) (TC 8.A.1) family.

Its subcellular location is the membrane. In Helicobacter pylori (strain ATCC 700392 / 26695) (Campylobacter pylori), this protein is 36 kDa antigen.